The sequence spans 253 residues: uncharacterized protein (253 aa).

Belongs to the methyltransferase superfamily.

This is an uncharacterized protein from Mycobacterium avium (strain 104).